We begin with the raw amino-acid sequence, 355 residues long: Peptide chain release factor 1 (355 aa).

Glutamine 233 carries the post-translational modification N5-methylglutamine.

Belongs to the prokaryotic/mitochondrial release factor family. Post-translationally, methylated by PrmC. Methylation increases the termination efficiency of RF1.

The protein localises to the cytoplasm. In terms of biological role, peptide chain release factor 1 directs the termination of translation in response to the peptide chain termination codons UAG and UAA. This chain is Peptide chain release factor 1, found in Bacillus cytotoxicus (strain DSM 22905 / CIP 110041 / 391-98 / NVH 391-98).